The sequence spans 544 residues: CTP synthase (544 aa).

The interval 1–265 is amidoligase domain; that stretch reads MARFIFITGG…DEAVLSAFGI (265 aa). Ser-13 contributes to the CTP binding site. UTP is bound at residue Ser-13. 14–19 contacts ATP; that stretch reads SLGKGL. Tyr-54 contributes to the L-glutamine binding site. ATP is bound at residue Asp-71. Asp-71 and Glu-139 together coordinate Mg(2+). CTP is bound by residues 146 to 148, 186 to 191, and Lys-222; these read DIE and KTKPTQ. Residues 186–191 and Lys-222 each bind UTP; that span reads KTKPTQ. Residues 291–543 form the Glutamine amidotransferase type-1 domain; sequence TIGVVGKYVG…IAAALQQSRL (253 aa). Gly-355 contacts L-glutamine. The active-site Nucleophile; for glutamine hydrolysis is Cys-382. L-glutamine contacts are provided by residues 383-386, Glu-406, and Arg-471; that span reads LGMQ. Active-site residues include His-516 and Glu-518.

This sequence belongs to the CTP synthase family. As to quaternary structure, homotetramer.

It carries out the reaction UTP + L-glutamine + ATP + H2O = CTP + L-glutamate + ADP + phosphate + 2 H(+). The catalysed reaction is L-glutamine + H2O = L-glutamate + NH4(+). The enzyme catalyses UTP + NH4(+) + ATP = CTP + ADP + phosphate + 2 H(+). Its pathway is pyrimidine metabolism; CTP biosynthesis via de novo pathway; CTP from UDP: step 2/2. With respect to regulation, allosterically activated by GTP, when glutamine is the substrate; GTP has no effect on the reaction when ammonia is the substrate. The allosteric effector GTP functions by stabilizing the protein conformation that binds the tetrahedral intermediate(s) formed during glutamine hydrolysis. Inhibited by the product CTP, via allosteric rather than competitive inhibition. Functionally, catalyzes the ATP-dependent amination of UTP to CTP with either L-glutamine or ammonia as the source of nitrogen. Regulates intracellular CTP levels through interactions with the four ribonucleotide triphosphates. The chain is CTP synthase from Rhizorhabdus wittichii (strain DSM 6014 / CCUG 31198 / JCM 15750 / NBRC 105917 / EY 4224 / RW1) (Sphingomonas wittichii).